Consider the following 787-residue polypeptide: Lysine-specific demethylase JMJ13 (787 aa).

One can recognise a JmjN domain in the interval 103 to 144 (CPVYRPTKEEFEDPLTYLQKIFPEASKYGICKIVSPLTATVP). A JmjC domain is found at 250–420 (SSKWNLNKVS…FGAIASCRYA (171 aa)). His293, Glu295, and His388 together coordinate Fe cation. Residues Cys500, Cys503, Cys514, Cys516, His519, Cys522, His525, and Cys534 each contribute to the Zn(2+) site. A C4HCHC zinc finger spans residues 500–551 (CSLCKRDCYLAFINCECYSHPVCLRHDVKKLDLPCGTTHTLYLRDNIEDMEA). The C5HC2 zinc finger occupies 500–551 (CSLCKRDCYLAFINCECYSHPVCLRHDVKKLDLPCGTTHTLYLRDNIEDMEA). In terms of domain architecture, FYR N-terminal spans 617 to 675 (VMSYEANASCISSVADDYECSDYVNRRANCSSSSDSKLSEEVACSSSKKTRFFPVVQDE). One can recognise an FYR C-terminal domain in the interval 677 to 756 (LVADQESDGS…ELVISNRKET (80 aa)). Residues 712–769 (ESDHHQELKRLKKSHHHEGRYSSSSSVSRQEEEEDELVISNRKETQQQSDVKMQKKRI) form a disordered region. Residues 752 to 759 (NRKETQQQ) carry the Nuclear localization signal motif.

The protein belongs to the JARID1 histone demethylase family. Requires Fe(2+) as cofactor. Mostly expressed in leaves, and, to a lower extent, in inflorescences, roots, siliques and stems.

The protein localises to the nucleus. The enzyme catalyses N(6),N(6),N(6)-trimethyl-L-lysyl(27)-[histone H3] + 2-oxoglutarate + O2 = N(6),N(6)-dimethyl-L-lysyl(27)-[histone H3] + formaldehyde + succinate + CO2. Functionally, histone demethylase that demethylates 'Lys-27' (H3K27me) of histone H3 with a specific activity for H3K27me3 and involved in the regulation of gene expression. Acts as a temperature and photoperiod dependent flowering repressor. This is Lysine-specific demethylase JMJ13 from Arabidopsis thaliana (Mouse-ear cress).